Here is a 202-residue protein sequence, read N- to C-terminus: Small ribosomal subunit protein uS4 (202 aa).

The S4 RNA-binding domain maps to 93-155; the sequence is RRLDNVVRRV…ENLKNLYRGV (63 aa).

The protein belongs to the universal ribosomal protein uS4 family. As to quaternary structure, part of the 30S ribosomal subunit. Contacts protein S5. The interaction surface between S4 and S5 is involved in control of translational fidelity.

Functionally, one of the primary rRNA binding proteins, it binds directly to 16S rRNA where it nucleates assembly of the body of the 30S subunit. Its function is as follows. With S5 and S12 plays an important role in translational accuracy. The protein is Small ribosomal subunit protein uS4 of Rhodopirellula baltica (strain DSM 10527 / NCIMB 13988 / SH1).